Here is a 157-residue protein sequence, read N- to C-terminus: Protein Smg (157 aa).

This sequence belongs to the Smg family.

In Shigella boydii serotype 18 (strain CDC 3083-94 / BS512), this protein is Protein Smg.